The primary structure comprises 297 residues: 4-hydroxy-tetrahydrodipicolinate synthase (297 aa).

Position 47 (Thr-47) interacts with pyruvate. Catalysis depends on Tyr-135, which acts as the Proton donor/acceptor. The Schiff-base intermediate with substrate role is filled by Lys-163. Ile-205 is a binding site for pyruvate.

This sequence belongs to the DapA family. Homotetramer; dimer of dimers.

The protein localises to the cytoplasm. The catalysed reaction is L-aspartate 4-semialdehyde + pyruvate = (2S,4S)-4-hydroxy-2,3,4,5-tetrahydrodipicolinate + H2O + H(+). The protein operates within amino-acid biosynthesis; L-lysine biosynthesis via DAP pathway; (S)-tetrahydrodipicolinate from L-aspartate: step 3/4. In terms of biological role, catalyzes the condensation of (S)-aspartate-beta-semialdehyde [(S)-ASA] and pyruvate to 4-hydroxy-tetrahydrodipicolinate (HTPA). This Dehalococcoides mccartyi (strain CBDB1) protein is 4-hydroxy-tetrahydrodipicolinate synthase.